We begin with the raw amino-acid sequence, 305 residues long: MSMKRPQDHSKQEMAARIIQKAWKTFLNVSVFQHFKSLIDLRRQGEPRQIVKYINPKEAELLDAAAGVQVRFRLGGVKFPPEIYYKIFTHRHIEDLCANSPRDYTKLPARYASHNKDDPPQVEDNSGWYRRIENNGWRPVSNRFWMPTENEVLESTKESEFHFSKLKRKQDLEKKRKIKKIEWMRQMYYLGSLEAKVTDRETLVLIHKATKGLIKSIEDGGVDSVMEWEVDEVLNWTNTLNFDDYIASWRETATSNSSAYLKDAKLQRIQKSLQRKIYEDETKESEEKIYYDGDFYENVYIKPLL.

As to quaternary structure, can homodimerize. Interacts with MFF; the interaction inhibits MFF interaction with DNM1L.

It is found in the cytoplasm. It localises to the cytosol. The protein resides in the mitochondrion outer membrane. Its function is as follows. Acts as an inhibitor of mitochondrial fission. Interacts with MFF and prevents DNM1L recruitment to mitochondria, promoting a more fused mitochondrial network. This Rattus norvegicus (Rat) protein is Protein MFI.